A 1089-amino-acid polypeptide reads, in one-letter code: Protein phosphatase 1 regulatory subunit 3A (1089 aa).

A disordered region spans residues 32–57 (KATFKPGFSPQPSRRGSGSSEDMYLD). Low complexity predominate over residues 37–51 (PGFSPQPSRRGSGSS). Residues serine 40 and serine 44 each carry the phosphoserine; by GSK3 modification. Serine 48 and serine 51 each carry phosphoserine. Threonine 58 bears the Phosphothreonine mark. Residues 64–67 (RRVS) carry the PP1-binding motif motif. Serine 67 is modified (phosphoserine; by PKA). A CBM21 domain is found at 123–231 (EQLQVQKAVL…NNNGTNYILV (109 aa)). Disordered regions lie at residues 385 to 420 (FYHS…GDTS), 479 to 501 (HGDS…KVDN), and 566 to 649 (PCPS…SDIA). Positions 581–600 (SGSNLEPGTSDLSSPRNFSP) are enriched in polar residues. The segment covering 602-614 (TDDHLFQADRENS) has biased composition (basic and acidic residues). The segment covering 615–625 (DSSNPENQNMN) has biased composition (polar residues). Serine 821 is modified (phosphoserine). Residues 949–968 (IMKSGSGGERGGGPILQQKE) are disordered. The span at 953 to 962 (GSGGERGGGP) shows a compositional bias: gly residues. Residues 1047–1067 (LLFLIFLATVYYYDLMIGLAF) form a helical membrane-spanning segment.

Interacts with PPP1CC catalytic subunit of PP1, and associates with glycogen. Post-translationally, phosphorylation at Ser-48 by ISPK stimulates the dephosphorylation of glycogen synthase and phosphorylase kinase. As to expression, skeletal muscle and heart.

The protein resides in the membrane. Its function is as follows. Seems to act as a glycogen-targeting subunit for PP1. PP1 is essential for cell division, and participates in the regulation of glycogen metabolism, muscle contractility and protein synthesis. Plays an important role in glycogen synthesis but is not essential for insulin activation of glycogen synthase. In Mus musculus (Mouse), this protein is Protein phosphatase 1 regulatory subunit 3A (Ppp1r3a).